Here is a 107-residue protein sequence, read N- to C-terminus: UPF0145 protein CKO_02237 (107 aa).

It belongs to the UPF0145 family.

In Citrobacter koseri (strain ATCC BAA-895 / CDC 4225-83 / SGSC4696), this protein is UPF0145 protein CKO_02237.